A 325-amino-acid polypeptide reads, in one-letter code: Interleukin-10 receptor subunit beta (325 aa).

Positions 1-19 (MAWSLGSWLGGCLLVSALG) are cleaved as a signal peptide. The Extracellular portion of the chain corresponds to 20–220 (MVPPPENVRM…QTTHDETVPS (201 aa)). Fibronectin type-III domains follow at residues 23–111 (PPEN…VDDT) and 114–216 (GPPG…THDE). Residues asparagine 49, asparagine 68, asparagine 102, and asparagine 161 are each glycosylated (N-linked (GlcNAc...) asparagine). A disulfide bridge links cysteine 66 with cysteine 74. An intrachain disulfide couples cysteine 188 to cysteine 209. A helical membrane pass occupies residues 221-242 (WMVAVILMASVFMVCLALLGCF). Topologically, residues 243–325 (ALLWCVYKKT…GTPPGQGPQS (83 aa)) are cytoplasmic. A disordered region spans residues 301–325 (DSESGKQNPGDSCSLGTPPGQGPQS). Residues 305–315 (GKQNPGDSCSL) show a composition bias toward polar residues.

Belongs to the type II cytokine receptor family. In terms of assembly, heterodimer with IFNLR1.

The protein localises to the membrane. Shared cell surface receptor required for the activation of five class 2 cytokines: IL10, IL22, IL26, IL28, and IFNL1. The IFNLR1/IL10RB dimer is a receptor for the cytokine ligands IFNL2 and IFNL3 and mediates their antiviral activity. The ligand/receptor complex stimulate the activation of the JAK/STAT signaling pathway leading to the expression of IFN-stimulated genes (ISG), which contribute to the antiviral state. The sequence is that of Interleukin-10 receptor subunit beta (IL10RB) from Homo sapiens (Human).